The following is a 424-amino-acid chain: MAAESDVLHFQFEQQGDVVLQKMNLLRQQNLFCDVSIYINDTEFQGHKVILAACSTFMRDQFLLTQSKHVRITILQSAEVGRKLLLSCYTGALEVKRKELLKYLTAASYLQMVHIVEKCTEALSKYLEIDLSMKNNNQHTDLCQSSDPDVKNEDENSDKDCEIIEISEDSPVNIDFHVKEEESNALQSTVESLTSERKEMKSPELSTVDIGFKDNEICILHVESISTAGVENGQFSQPCTSSKASMYFSETQHSLINSTVESRVAEVPGNQDQGLFCENTEGSYGTVSEIQNLEEGYSLRHQCPRCPRGFLHVENYLRHLKMHKLFLCLQCGKTFTQKKNLNRHIRGHMGIRPFQCTVCLKTFTAKSTLQDHLNIHSGDRPYKCHCCDMDFKHKSALKKHLTSVHGRSSGEKLSRPDLKRQSLL.

A BTB domain is found at 33 to 97 (CDVSIYINDT…CYTGALEVKR (65 aa)). Serine 202 carries the phosphoserine modification. 4 consecutive C2H2-type zinc fingers follow at residues 301-323 (HQCP…LKMH), 326-348 (FLCL…IRGH), 354-376 (FQCT…LNIH), and 382-405 (YKCH…TSVH). A disordered region spans residues 402–424 (TSVHGRSSGEKLSRPDLKRQSLL). The segment covering 408-424 (SSGEKLSRPDLKRQSLL) has biased composition (basic and acidic residues).

Widely expressed with highest levels in brain.

It localises to the nucleus. Functionally, may be involved in transcriptional regulation. The protein is Zinc finger and BTB domain-containing protein 6 (ZBTB6) of Homo sapiens (Human).